The primary structure comprises 149 residues: Alpha-crystallin A chain (149 aa).

In terms of domain architecture, sHSP spans 41–149 (LFRSVLESGI…DPSHSERPIP (109 aa)). Residues His-89, Glu-91, His-96, and His-143 each coordinate Zn(2+).

The protein belongs to the small heat shock protein (HSP20) family. In terms of assembly, heteropolymer composed of three CRYAA and one CRYAB subunits. Inter-subunit bridging via zinc ions enhances stability, which is crucial as there is no protein turn over in the lens. Can also form homodimers and homotetramers (dimers of dimers) which serve as the building blocks of homooligomers. Within homooligomers, the zinc-binding motif is created from residues of 3 different molecules. His-89 and Glu-91 from one molecule are ligands of the zinc ion, and His-96 and His-143 residues from additional molecules complete the site with tetrahedral coordination geometry.

Its subcellular location is the cytoplasm. It is found in the nucleus. In terms of biological role, contributes to the transparency and refractive index of the lens. May act as a chaperone, preventing aggregation of various proteins under a wide range of stress conditions. In Eudromia elegans (Elegant crested-tinamou), this protein is Alpha-crystallin A chain (CRYAA).